The sequence spans 232 residues: Large ribosomal subunit protein uL1 (232 aa).

The protein belongs to the universal ribosomal protein uL1 family. As to quaternary structure, part of the 50S ribosomal subunit.

Functionally, binds directly to 23S rRNA. The L1 stalk is quite mobile in the ribosome, and is involved in E site tRNA release. In terms of biological role, protein L1 is also a translational repressor protein, it controls the translation of the L11 operon by binding to its mRNA. This is Large ribosomal subunit protein uL1 from Methylorubrum extorquens (strain CM4 / NCIMB 13688) (Methylobacterium extorquens).